The primary structure comprises 378 residues: Pre-B-cell leukemia transcription factor 4 (378 aa).

Pro residues predominate over residues 1-15; that stretch reads MAAPLRPVPPQPAPR. 2 disordered regions span residues 1-24 and 100-125; these read MAAP…APLG and VSRP…PNDN. One can recognise a PBC domain in the interval 22 to 214; sequence PLGHDTSDVL…VMTLRSRFLD (193 aa). Positions 29 to 107 are PBC-A; sequence DVLQQIMAIT…EGVSRPEKRG (79 aa). Low complexity predominate over residues 109–120; it reads GAAAGSTATPGG. The segment at 110–214 is PBC-B; that stretch reads AAAGSTATPG…VMTLRSRFLD (105 aa). Residues 215 to 277 constitute a DNA-binding region (homeobox; TALE-type); the sequence is ARRKRRNFSK…NKRIRYKKNT (63 aa). Disordered stretches follow at residues 291–320 and 355–378; these read ASTV…PLPL and RAAP…AASN. Residues 356 to 370 show a composition bias toward low complexity; that stretch reads AAPQPASSPAGESGS.

It belongs to the TALE/PBX homeobox family. As to expression, almost exclusively expressed in testis.

Its subcellular location is the nucleus. The chain is Pre-B-cell leukemia transcription factor 4 (Pbx4) from Mus musculus (Mouse).